Here is a 389-residue protein sequence, read N- to C-terminus: cAMP-dependent protein kinase regulatory subunit (389 aa).

Disordered regions lie at residues 1–57 and 87–110; these read MSEN…KFAG and SVSA…PPYH. A dimerization and phosphorylation region spans residues 1–128; it reads MSENTFPGRL…RLKKSISGNF (128 aa). Residues 21 to 31 show a composition bias toward polar residues; sequence AANTEKPSTSH. Residues 34–43 are compositionally biased toward basic and acidic residues; the sequence is RVTERDEDKV. Ser-87 carries the phosphoserine modification. Residues 87-105 show a composition bias toward polar residues; it reads SVSAESLNPNPTASSNESW. 3',5'-cyclic AMP contacts are provided by residues 129–258, Glu-207, Arg-216, 261–377, Glu-327, and Arg-336; these read LFNH…FLEE and LLST…GVEE.

Belongs to the cAMP-dependent kinase regulatory chain family. As to quaternary structure, tetramer, composed of 2 regulatory (R) and 2 catalytic (C) subunits. In the presence of cAMP it dissociates into 2 active monomeric C subunits and an R dimer.

The protein is cAMP-dependent protein kinase regulatory subunit (pkar) of Blumeria graminis (Powdery mildew).